Here is a 269-residue protein sequence, read N- to C-terminus: uncharacterized protein (269 aa).

The stretch at 52–262 (KNVYEQLVAT…RKILVESINK (211 aa)) forms a coiled coil.

This is an uncharacterized protein from Caenorhabditis elegans.